We begin with the raw amino-acid sequence, 52 residues long: Transcriptional regulator SlrA (52 aa).

A Sin domain is found at 1–38 (MKTHVKKDLDKGWHMLIQEARSIGLGIHDVRQFLESET).

In terms of assembly, component of the SlrR/SlrA complex.

In terms of biological role, required specifically for induction of eps and yqxM operons by antagonizing SinR. Regulates SlrR activity. Controls the initiation of biofilm formation. The polypeptide is Transcriptional regulator SlrA (slrA) (Bacillus subtilis (strain 168)).